We begin with the raw amino-acid sequence, 1465 residues long: DNA polymerase III PolC-type (1465 aa).

In terms of domain architecture, Exonuclease spans 431–583; it reads DVETTGLSAM…YDAEATGRLL (153 aa).

Belongs to the DNA polymerase type-C family. PolC subfamily.

The protein resides in the cytoplasm. The enzyme catalyses DNA(n) + a 2'-deoxyribonucleoside 5'-triphosphate = DNA(n+1) + diphosphate. Functionally, required for replicative DNA synthesis. This DNA polymerase also exhibits 3' to 5' exonuclease activity. The polypeptide is DNA polymerase III PolC-type (Streptococcus pyogenes).